Consider the following 268-residue polypeptide: Imidazole glycerol phosphate synthase subunit HisF (268 aa).

Catalysis depends on residues Asp12 and Asp131.

This sequence belongs to the HisA/HisF family. As to quaternary structure, heterodimer of HisH and HisF.

Its subcellular location is the cytoplasm. The catalysed reaction is 5-[(5-phospho-1-deoxy-D-ribulos-1-ylimino)methylamino]-1-(5-phospho-beta-D-ribosyl)imidazole-4-carboxamide + L-glutamine = D-erythro-1-(imidazol-4-yl)glycerol 3-phosphate + 5-amino-1-(5-phospho-beta-D-ribosyl)imidazole-4-carboxamide + L-glutamate + H(+). The protein operates within amino-acid biosynthesis; L-histidine biosynthesis; L-histidine from 5-phospho-alpha-D-ribose 1-diphosphate: step 5/9. Its function is as follows. IGPS catalyzes the conversion of PRFAR and glutamine to IGP, AICAR and glutamate. The HisF subunit catalyzes the cyclization activity that produces IGP and AICAR from PRFAR using the ammonia provided by the HisH subunit. This chain is Imidazole glycerol phosphate synthase subunit HisF, found in Methanoregula boonei (strain DSM 21154 / JCM 14090 / 6A8).